Here is a 521-residue protein sequence, read N- to C-terminus: 56 kDa type-specific antigen (521 aa).

The N-terminal stretch at 1–22 (MRKIMLIASAMSALSLPFSANA) is a signal peptide. A helical membrane pass occupies residues 64 to 86 (LPLIKGMPFGVTLAAGMTITPGV). The disordered stretch occupies residues 386–415 (LGVDQGQEGGCSKDKKQSDTTAEESKKEGK). Over residues 396-415 (CSKDKKQSDTTAEESKKEGK) the composition is skewed to basic and acidic residues. The helical transmembrane segment at 469-484 (TGMVGSLALGVAANVA) threads the bilayer.

The protein localises to the cell membrane. Functionally, may be an adherent factor for rickettsial adsorption to the host-cell surface and a determinant of virulence of individual rickettsial strain. It is the major outer membrane protein. This Orientia tsutsugamushi (Rickettsia tsutsugamushi) protein is 56 kDa type-specific antigen.